A 97-amino-acid polypeptide reads, in one-letter code: Antitoxin TacA2 (97 aa).

The protein belongs to the TacA antitoxin family. In terms of assembly, homodimer. Forms a complex with cognate toxin TacT2.

Its function is as follows. Antitoxin component of a type II toxin-antitoxin (TA) system. Counteracts the toxic effect of cognate toxin TacT2. The TacA2-TacT2 complex both represses and derepresses expression of its own operon. The sequence is that of Antitoxin TacA2 from Salmonella enteritidis.